Consider the following 239-residue polypeptide: Large ribosomal subunit protein uL30 (239 aa).

The interval 1 to 22 (MEGVMSEAPQSSIRKKEYEARM) is disordered.

This sequence belongs to the universal ribosomal protein uL30 family.

This Encephalitozoon cuniculi (strain GB-M1) (Microsporidian parasite) protein is Large ribosomal subunit protein uL30 (RPL7).